Consider the following 246-residue polypeptide: tRNA (guanine-N(1)-)-methyltransferase (246 aa).

S-adenosyl-L-methionine is bound by residues glycine 113 and 133–138 (IGDYVL).

The protein belongs to the RNA methyltransferase TrmD family. As to quaternary structure, homodimer.

Its subcellular location is the cytoplasm. It carries out the reaction guanosine(37) in tRNA + S-adenosyl-L-methionine = N(1)-methylguanosine(37) in tRNA + S-adenosyl-L-homocysteine + H(+). Its function is as follows. Specifically methylates guanosine-37 in various tRNAs. This is tRNA (guanine-N(1)-)-methyltransferase from Haemophilus influenzae (strain PittGG).